The following is a 156-amino-acid chain: 6,7-dimethyl-8-ribityllumazine synthase (156 aa).

5-amino-6-(D-ribitylamino)uracil is bound by residues phenylalanine 23, 57–59 (SWE), and 81–83 (AVV). 86 to 87 (ET) provides a ligand contact to (2S)-2-hydroxy-3-oxobutyl phosphate. Histidine 89 acts as the Proton donor in catalysis. Phenylalanine 114 is a 5-amino-6-(D-ribitylamino)uracil binding site. Position 128 (arginine 128) interacts with (2S)-2-hydroxy-3-oxobutyl phosphate.

Belongs to the DMRL synthase family.

It carries out the reaction (2S)-2-hydroxy-3-oxobutyl phosphate + 5-amino-6-(D-ribitylamino)uracil = 6,7-dimethyl-8-(1-D-ribityl)lumazine + phosphate + 2 H2O + H(+). It participates in cofactor biosynthesis; riboflavin biosynthesis; riboflavin from 2-hydroxy-3-oxobutyl phosphate and 5-amino-6-(D-ribitylamino)uracil: step 1/2. In terms of biological role, catalyzes the formation of 6,7-dimethyl-8-ribityllumazine by condensation of 5-amino-6-(D-ribitylamino)uracil with 3,4-dihydroxy-2-butanone 4-phosphate. This is the penultimate step in the biosynthesis of riboflavin. This is 6,7-dimethyl-8-ribityllumazine synthase from Salinibacter ruber (strain DSM 13855 / M31).